Consider the following 260-residue polypeptide: Small ribosomal subunit protein eS1 (260 aa).

Lys30 carries the post-translational modification N6-acetyllysine; alternate. Residue Lys30 forms a Glycyl lysine isopeptide (Lys-Gly) (interchain with G-Cter in SUMO2); alternate linkage. Lys52 is subject to N6-acetyllysine. Tyr151 carries the ADP-ribosyltyrosine modification. The segment at His228–Val260 is disordered. Residues Ser232 and Ser233 each carry the phosphoserine modification. Residues Thr238 to Gly251 are compositionally biased toward basic and acidic residues. Position 245 is an N6-acetyllysine; alternate (Lys245). Residue Lys245 forms a Glycyl lysine isopeptide (Lys-Gly) (interchain with G-Cter in SUMO2); alternate linkage. Residue Tyr252 is modified to Phosphotyrosine. Position 259 is a phosphoserine (Ser259).

The protein belongs to the eukaryotic ribosomal protein eS1 family. In terms of assembly, component of the small ribosomal subunit. Mature ribosomes consist of a small (40S) and a large (60S) subunit. The 40S subunit contains about 33 different proteins and 1 molecule of RNA (18S). The 60S subunit contains about 49 different proteins and 3 molecules of RNA (28S, 5.8S and 5S). Identified in a IGF2BP1-dependent mRNP granule complex containing untranslated mRNAs. Binds with high affinity to IPO4. Interacts with DDIT3. Part of the small subunit (SSU) processome, composed of more than 70 proteins and the RNA chaperone small nucleolar RNA (snoRNA) U3. Post-translationally, ADP-ribosylated at Tyr-151 by PARP1 in presence of HPF1.

The protein resides in the cytoplasm. Its subcellular location is the nucleus. It localises to the nucleolus. Component of the small ribosomal subunit. The ribosome is a large ribonucleoprotein complex responsible for the synthesis of proteins in the cell. Part of the small subunit (SSU) processome, first precursor of the small eukaryotic ribosomal subunit. During the assembly of the SSU processome in the nucleolus, many ribosome biogenesis factors, an RNA chaperone and ribosomal proteins associate with the nascent pre-rRNA and work in concert to generate RNA folding, modifications, rearrangements and cleavage as well as targeted degradation of pre-ribosomal RNA by the RNA exosome. May play a role during erythropoiesis through regulation of transcription factor DDIT3. In Felis catus (Cat), this protein is Small ribosomal subunit protein eS1.